The chain runs to 467 residues: Ribulose bisphosphate carboxylase large chain (467 aa).

Lys-5 carries the post-translational modification N6,N6,N6-trimethyllysine. Asn-114 and Thr-164 together coordinate substrate. Lys-166 serves as the catalytic Proton acceptor. Lys-168 is a binding site for substrate. Positions 192, 194, and 195 each coordinate Mg(2+). Lys-192 carries the post-translational modification N6-carboxylysine. Residue His-285 is the Proton acceptor of the active site. Arg-286, His-318, and Ser-370 together coordinate substrate.

Belongs to the RuBisCO large chain family. Type I subfamily. Heterohexadecamer of 8 large chains and 8 small chains; disulfide-linked. The disulfide link is formed within the large subunit homodimers. Requires Mg(2+) as cofactor. The disulfide bond which can form in the large chain dimeric partners within the hexadecamer appears to be associated with oxidative stress and protein turnover.

It is found in the plastid. It localises to the chloroplast. It catalyses the reaction 2 (2R)-3-phosphoglycerate + 2 H(+) = D-ribulose 1,5-bisphosphate + CO2 + H2O. The enzyme catalyses D-ribulose 1,5-bisphosphate + O2 = 2-phosphoglycolate + (2R)-3-phosphoglycerate + 2 H(+). Its function is as follows. RuBisCO catalyzes two reactions: the carboxylation of D-ribulose 1,5-bisphosphate, the primary event in carbon dioxide fixation, as well as the oxidative fragmentation of the pentose substrate in the photorespiration process. Both reactions occur simultaneously and in competition at the same active site. This is Ribulose bisphosphate carboxylase large chain from Scutellaria bolanderi (Sierra skullcap).